A 308-amino-acid chain; its full sequence is Probable manganese-dependent inorganic pyrophosphatase (308 aa).

The Mn(2+) site is built by histidine 9, aspartate 13, aspartate 15, aspartate 75, histidine 97, and aspartate 149.

This sequence belongs to the PPase class C family. Mn(2+) serves as cofactor.

It is found in the cytoplasm. The catalysed reaction is diphosphate + H2O = 2 phosphate + H(+). The sequence is that of Probable manganese-dependent inorganic pyrophosphatase from Listeria monocytogenes serotype 4a (strain HCC23).